The primary structure comprises 706 residues: Alpha-hemolysin translocation ATP-binding protein HlyB (706 aa).

Residues Met-1–Val-125 form the Peptidase C39 domain. His-83 is an active-site residue. 5 helical membrane passes run Ile-153–Leu-173, Leu-191–Ala-211, Ala-269–Tyr-289, Leu-295–Leu-315, and Val-388–Gly-408. One can recognise an ABC transmembrane type-1 domain in the interval Leu-154–Gln-436. An ABC transporter domain is found at Ile-468 to Gln-703. Gly-502–Ser-509 is a binding site for ATP.

It belongs to the ABC transporter superfamily. Protein-1 exporter (TC 3.A.1.109) family. As to quaternary structure, homodimer.

The protein localises to the cell inner membrane. Functionally, part of the ABC transporter complex HlyBD involved in hemolysin export. Transmembrane domains (TMD) form a pore in the inner membrane and the ATP-binding domain (NBD) is responsible for energy generation. This is Alpha-hemolysin translocation ATP-binding protein HlyB (hlyB) from Escherichia coli O157:H7.